The chain runs to 574 residues: Uric acid-xanthine permease (574 aa).

The disordered stretch occupies residues 1-20 (MDNSIHSTDGPDSVIPNSNP). A run of 12 helical transmembrane segments spans residues 77 to 97 (LLAF…VVTP), 111 to 131 (LQQY…MVQI), 141 to 161 (YYIG…ISVA), 188 to 209 (AYGA…LAFV), 217 to 237 (IFPP…LIGT), 264 to 284 (LPWG…SIIL), 296 to 315 (CSVV…CGYF), 338 to 361 (VYGP…IGDV), 427 to 447 (CCLI…IVAI), 451 to 471 (VMGG…QAIV), 482 to 502 (FILT…TWFG), and 522 to 542 (LVLE…NAIM). Residues 555-574 (MPVSAHDNRDGEAEYQSKQA) are disordered. Residue lysine 572 forms a Glycyl lysine isopeptide (Lys-Gly) (interchain with G-Cter in ubiquitin) linkage.

This sequence belongs to the nucleobase:cation symporter-2 (NCS2) (TC 2.A.40) family. In terms of processing, ubiquitinated by hulA. Ubiquitination leads to internalization, sorting into the endosomal pathway to the vacuolar lumen where uapA is eventually degraded.

It is found in the cell membrane. Functionally, uric acid-xanthine transporter. The polypeptide is Uric acid-xanthine permease (uapA) (Emericella nidulans (strain FGSC A4 / ATCC 38163 / CBS 112.46 / NRRL 194 / M139) (Aspergillus nidulans)).